A 348-amino-acid chain; its full sequence is Mitogen-activated protein kinase kinase 5 (348 aa).

Disordered stretches follow at residues 1-26 (MKPIQSPSGVASPMKNRLRKRPDLSL) and 35-54 (LAVPLPLPPPSSSSSAPASS). S6 is modified (phosphoserine; by ASK7). One can recognise a Protein kinase domain in the interval 70–325 (LERVNRIGSG…AQQLLQHPFI (256 aa)). ATP contacts are provided by residues 76 to 84 (IGSGAGGTV) and K99. The active-site Proton acceptor is the D187. T215 is subject to Phosphothreonine. Phosphoserine; by ASK7 is present on S221. Residue S221 is modified to Phosphoserine. T225 is modified (phosphothreonine; by ASK7). An ADP-ribosylarginine; by HopF2 modification is found at R313.

It belongs to the protein kinase superfamily. STE Ser/Thr protein kinase family. MAP kinase kinase subfamily. As to quaternary structure, interacts with P.syringae type III effector HopF2. Interacts with BZR1. Interacts with MPK6 and MPK3. Interacts with RACK1A, RACK1B and RACK1C. Interacts with MAPKKK5 mainly in the cytosol. Binds to BASL. Interacts with MAPKKK20. Phosphorylation at Thr-215 and Ser-221 by MAP kinase kinase kinases positively regulates kinase activity. Phosphorylated by MAPKKK5 and MAPKKK20 in response to abscisic acid (ABA). In terms of processing, ADP-ribosylation at Arg-313 by P.syringae type III effector HopF2 reduces the ability of the protein to phosphorylate downstream MPK6. As to expression, expressed higher in stems and leaves than in flowers and roots.

It carries out the reaction L-seryl-[protein] + ATP = O-phospho-L-seryl-[protein] + ADP + H(+). The enzyme catalyses L-threonyl-[protein] + ATP = O-phospho-L-threonyl-[protein] + ADP + H(+). The catalysed reaction is L-tyrosyl-[protein] + ATP = O-phospho-L-tyrosyl-[protein] + ADP + H(+). Its activity is regulated as follows. Activated through serine and threonine phosphorylation by MEKK1 and MAPKKK20 in response to abscisic acid (ABA). Inhibited through phosphorylation by GSK3/Shaggy-like kinase ASKs. Inhibited through ADP-Ribosylation by P.syringae HopF2. Activated after high light stress. Its function is as follows. Mitogen-activated protein kinase kinase (MAPKK) which regulates abscisic acid (ABA) responses in a MAPKKK20-MKK5-MPK6 cascade involved in root growth (e.g. root cell division and elongation) and stomatal response, probably via MAPK6 activation by protein phosphorylation. Involved in the second phase of hydrogen peroxide generation during hypersensitive response-like cell death. Involved in the innate immune MAP kinase signaling cascade (MEKK1, MKK4/MKK5 and MPK3/MPK6) downstream of bacterial flagellin receptor FLS2. Activates by phosphorylation the downstream MPK3 and MPK6. YDA-MKK4/MKK5-MPK3/MPK6 module regulates stomatal cell fate before the guard mother cell (GMC) is specified. This MAPK cascade also functions downstream of the ER receptor in regulating coordinated local cell proliferation, which shapes the morphology of plant organs. MKK4 and MKK5 participate in the regulation of floral organ abscission. Target of the Pseudomonas syringae type III effector HopF2, that inhibits the activation of the downstream MPK6 and PAMP-triggered immunity. Plays a critical role in high light stress tolerance by the mediation of the Cu/Zn SODs CSD1 and CSD2 gene expression. Phosphorylates BZR1 in vitro. The protein is Mitogen-activated protein kinase kinase 5 of Arabidopsis thaliana (Mouse-ear cress).